Consider the following 525-residue polypeptide: AP-4 complex accessory subunit Tepsin (525 aa).

The 134-residue stretch at 8–141 (RDRLSFLHRL…FSDTVLPLAP (134 aa)) folds into the ENTH domain. Residues 139-229 (LAPSQPLGTP…SHSGASREPG (91 aa)) form a disordered region. The span at 193 to 225 (SGPSSQNSSQNSDLSRVSDSGSHSGSDSHSGAS) shows a compositional bias: low complexity. A phosphoserine mark is found at serine 333 and serine 356. Residues 355-465 (LSPARGTSAE…PKRGPSSCAW (111 aa)) are disordered. Positions 393–412 (PLSSTPVSSRSPAPSSGMPS) are enriched in low complexity. Over residues 413-429 (SPVPTPPPDASPIPAPG) the composition is skewed to pro residues. Basic and acidic residues predominate over residues 434–448 (AEARLAESRRWRPER). The interaction with AP4B1 stretch occupies residues 467 to 477 (RDSLFAGMELV). The disordered stretch occupies residues 487-525 (AAAGESCPDAPRAPQTSSQRTAAKEPPGSEPSAFAFLNA). The interaction with AP4E1 stretch occupies residues 515–525 (SEPSAFAFLNA).

In terms of assembly, interacts with AP4B1 and AP4E1; the interaction is direct and mediates the association of TEPSIN with the adapter-like complex 4 (AP-4), a heterotetramer composed of AP4B1, AP4E1, AP4M1 and AP4S1.

It is found in the golgi apparatus. It localises to the trans-Golgi network membrane. Its subcellular location is the cytoplasmic vesicle. The protein localises to the cytoplasm. The protein resides in the cytosol. Associates with the adapter-like complex 4 (AP-4) and may therefore play a role in vesicular trafficking of proteins at the trans-Golgi network. The chain is AP-4 complex accessory subunit Tepsin from Homo sapiens (Human).